The chain runs to 157 residues: uncharacterized protein (157 aa).

Residues Asn33–Leu134 enclose the HD domain.

This is an uncharacterized protein from Clostridium beijerinckii (strain ATCC 51743 / NCIMB 8052) (Clostridium acetobutylicum).